The sequence spans 364 residues: Chorismate synthase (364 aa).

Residue Arg-48 participates in NADP(+) binding. FMN contacts are provided by residues 131–133, 243–244, Gly-288, 303–307, and Arg-329; these read RSS, NA, and KPTSS.

It belongs to the chorismate synthase family. Homotetramer. FMNH2 serves as cofactor.

The enzyme catalyses 5-O-(1-carboxyvinyl)-3-phosphoshikimate = chorismate + phosphate. It participates in metabolic intermediate biosynthesis; chorismate biosynthesis; chorismate from D-erythrose 4-phosphate and phosphoenolpyruvate: step 7/7. Its function is as follows. Catalyzes the anti-1,4-elimination of the C-3 phosphate and the C-6 proR hydrogen from 5-enolpyruvylshikimate-3-phosphate (EPSP) to yield chorismate, which is the branch point compound that serves as the starting substrate for the three terminal pathways of aromatic amino acid biosynthesis. This reaction introduces a second double bond into the aromatic ring system. The protein is Chorismate synthase of Brucella anthropi (strain ATCC 49188 / DSM 6882 / CCUG 24695 / JCM 21032 / LMG 3331 / NBRC 15819 / NCTC 12168 / Alc 37) (Ochrobactrum anthropi).